The primary structure comprises 103 residues: MRGQQAPQQPTRVRTPRENENEVLGVIEQMLGASRVRVRCMDGKLRMGRIPGKLKRKIWVREDDVVIVTPWEVQSDEKCDVIWRYTKGQVDWLNRKGYLEFMR.

One can recognise an S1-like domain in the interval 11-86 (TRVRTPRENE…EKCDVIWRYT (76 aa)).

The protein belongs to the eIF-1A family.

In terms of biological role, seems to be required for maximal rate of protein biosynthesis. Enhances ribosome dissociation into subunits and stabilizes the binding of the initiator Met-tRNA(I) to 40 S ribosomal subunits. The protein is Translation initiation factor 1A (eIF1A) of Methanococcus maripaludis (strain C5 / ATCC BAA-1333).